Reading from the N-terminus, the 292-residue chain is Nitrogenase iron protein (292 aa).

10–17 (GKGGIGKS) is a binding site for ATP. C98 contributes to the [4Fe-4S] cluster binding site. At R101 the chain carries ADP-ribosylarginine; by dinitrogenase reductase ADP-ribosyltransferase. C133 serves as a coordination point for [4Fe-4S] cluster.

This sequence belongs to the NifH/BchL/ChlL family. Homodimer. It depends on [4Fe-4S] cluster as a cofactor. Post-translationally, the reversible ADP-ribosylation of Arg-101 inactivates the nitrogenase reductase and regulates nitrogenase activity.

It carries out the reaction N2 + 8 reduced [2Fe-2S]-[ferredoxin] + 16 ATP + 16 H2O = H2 + 8 oxidized [2Fe-2S]-[ferredoxin] + 2 NH4(+) + 16 ADP + 16 phosphate + 6 H(+). In terms of biological role, the key enzymatic reactions in nitrogen fixation are catalyzed by the nitrogenase complex, which has 2 components: the iron protein and the molybdenum-iron protein. The sequence is that of Nitrogenase iron protein from Teredinibacter turnerae (strain ATCC 39867 / T7901).